Consider the following 390-residue polypeptide: Centrosomal protein of 44 kDa (390 aa).

Residues 11-195 (RNLEQVLRLL…ISEDTLSPIT (185 aa)) form a binds with microtubules and centrioles region. Residues 233 to 269 (EITALQTMLAECQENLKKLTSIEKRLDCLEQKMKGKV) are a coiled coil. Residues 322–348 (RKSEVERPASIPLSSGYSTASSDSTPR) are disordered. S331 and S345 each carry phosphoserine. Positions 335-345 (SSGYSTASSDS) are enriched in low complexity. Residue T346 is modified to Phosphothreonine. Positions 361-385 (SEETTIQKMERMKKMFEETAELLKC) form a coiled coil.

As to quaternary structure, interacts with CROCC. Interacts with POC1B; the interaction is direct and recruits POC1B to centriolar microtubules. Binds to centriolar microtubules.

The protein localises to the cytoplasm. It localises to the cytoskeleton. Its subcellular location is the microtubule organizing center. The protein resides in the centrosome. It is found in the centriole. The protein localises to the spindle pole. It localises to the midbody. Centriole-enriched microtubule-binding protein involved in centriole biogenesis. In collaboration with CEP295 and POC1B, is required for the centriole-to-centrosome conversion by ensuring the formation of bona fide centriole wall. Functions as a linker component that maintains centrosome cohesion. Associates with CROCC and regulates its stability and localization to the centrosome. In Homo sapiens (Human), this protein is Centrosomal protein of 44 kDa (CEP44).